Reading from the N-terminus, the 130-residue chain is Protein UL145 (130 aa).

In terms of assembly, interacts with host DDB1; this interaction promotes STAT2 degradation.

Plays a role in the inhibition of host innate immunity by exploiting host DDB1-cullin RING ubiquitin ligases (CRLs). Mechanistically, recruits host DDB1 via a DCAF-like interaction motif to antagonize IFN signaling by STAT2 degradation. In Homo sapiens (Human), this protein is Protein UL145 (UL145).